The following is a 448-amino-acid chain: Adenylosuccinate synthetase (448 aa).

Residues 22–28 (GDEGKGK) and 50–52 (GHT) contribute to the GTP site. Asp-23 serves as the catalytic Proton acceptor. Mg(2+)-binding residues include Asp-23 and Gly-50. Residues 23 to 26 (DEGK), 48 to 51 (NAGH), Thr-139, Arg-153, Gln-234, Thr-249, and Arg-321 each bind IMP. His-51 (proton donor) is an active-site residue. 317-323 (SVTGRPR) contributes to the substrate binding site. GTP is bound by residues Arg-323, 349–351 (KLD), and 431–433 (STG).

The protein belongs to the adenylosuccinate synthetase family. Homodimer. Mg(2+) is required as a cofactor.

It is found in the cytoplasm. The enzyme catalyses IMP + L-aspartate + GTP = N(6)-(1,2-dicarboxyethyl)-AMP + GDP + phosphate + 2 H(+). It functions in the pathway purine metabolism; AMP biosynthesis via de novo pathway; AMP from IMP: step 1/2. In terms of biological role, plays an important role in the de novo pathway of purine nucleotide biosynthesis. Catalyzes the first committed step in the biosynthesis of AMP from IMP. The chain is Adenylosuccinate synthetase from Paraburkholderia xenovorans (strain LB400).